Consider the following 293-residue polypeptide: Ribosomal protein L11 methyltransferase (293 aa).

Residues Thr145, Gly166, Asp188, and Asn230 each contribute to the S-adenosyl-L-methionine site.

The protein belongs to the methyltransferase superfamily. PrmA family.

Its subcellular location is the cytoplasm. It carries out the reaction L-lysyl-[protein] + 3 S-adenosyl-L-methionine = N(6),N(6),N(6)-trimethyl-L-lysyl-[protein] + 3 S-adenosyl-L-homocysteine + 3 H(+). Functionally, methylates ribosomal protein L11. This is Ribosomal protein L11 methyltransferase from Pasteurella multocida (strain Pm70).